The following is a 226-amino-acid chain: 7-cyano-7-deazaguanine synthase (226 aa).

Leu-10–Ala-20 contacts ATP. Zn(2+)-binding residues include Cys-191, Cys-199, Cys-202, and Cys-205.

Belongs to the QueC family. Requires Zn(2+) as cofactor.

It catalyses the reaction 7-carboxy-7-deazaguanine + NH4(+) + ATP = 7-cyano-7-deazaguanine + ADP + phosphate + H2O + H(+). It participates in purine metabolism; 7-cyano-7-deazaguanine biosynthesis. Its function is as follows. Catalyzes the ATP-dependent conversion of 7-carboxy-7-deazaguanine (CDG) to 7-cyano-7-deazaguanine (preQ(0)). The chain is 7-cyano-7-deazaguanine synthase from Synechococcus sp. (strain CC9605).